The primary structure comprises 253 residues: 2-C-methyl-D-erythritol 4-phosphate cytidylyltransferase (253 aa).

The protein belongs to the IspD/TarI cytidylyltransferase family. IspD subfamily.

It carries out the reaction 2-C-methyl-D-erythritol 4-phosphate + CTP + H(+) = 4-CDP-2-C-methyl-D-erythritol + diphosphate. Its pathway is isoprenoid biosynthesis; isopentenyl diphosphate biosynthesis via DXP pathway; isopentenyl diphosphate from 1-deoxy-D-xylulose 5-phosphate: step 2/6. In terms of biological role, catalyzes the formation of 4-diphosphocytidyl-2-C-methyl-D-erythritol from CTP and 2-C-methyl-D-erythritol 4-phosphate (MEP). This Idiomarina loihiensis (strain ATCC BAA-735 / DSM 15497 / L2-TR) protein is 2-C-methyl-D-erythritol 4-phosphate cytidylyltransferase.